The following is a 218-amino-acid chain: Ras-related protein R-Ras (218 aa).

The disordered stretch occupies residues 1 to 30 (MSSGAASGTGRGRPRGGGPGPGDPPPSETH). The span at 7–20 (SGTGRGRPRGGGPG) shows a compositional bias: gly residues. Residue 36 to 44 (GGGGVGKSA) coordinates GTP. The Effector region motif lies at 58-66 (YDPTIEDSY). GTP is bound by residues 83–87 (DTAGQ), 142–145 (NKAD), and 172–174 (SAK). Cys215 carries the cysteine methyl ester modification. The S-geranylgeranyl cysteine moiety is linked to residue Cys215. A propeptide spans 216-218 (VLL) (removed in mature form).

It belongs to the small GTPase superfamily. Ras family. Interacts with PLCE1. Interacts (active GTP-bound form preferentially) with RGS14. Interacts with OSBPL3. Interacts with ZDHHC19. S-palmitoylated by ZDHHC19, leading to increased association with membranes and with rafts/caveolae as well as enhanced cell viability.

The protein localises to the cell membrane. It catalyses the reaction GTP + H2O = GDP + phosphate + H(+). In terms of biological role, GTP-binding protein with GTPase activity, likely involved in the regulation of MAPK signaling pathway and thereby controlling multiple cellular processes. Regulates the organization of the actin cytoskeleton. With OSPBL3, modulates integrin beta-1 (ITGB1) activity. The sequence is that of Ras-related protein R-Ras (RRAS) from Homo sapiens (Human).